The sequence spans 392 residues: Stilbene synthase 6 (392 aa).

K55–R58 is a binding site for substrate. The active site involves C164. Substrate-binding positions include L267 and G305–P307.

It belongs to the thiolase-like superfamily. Chalcone/stilbene synthases family. In terms of assembly, homodimer.

It localises to the cytoplasm. It catalyses the reaction 4-coumaroyl-CoA + 3 malonyl-CoA + 3 H(+) = trans-resveratrol + 4 CO2 + 4 CoA. The protein operates within phytoalexin biosynthesis; 3,4',5-trihydroxystilbene biosynthesis; 3,4',5-trihydroxystilbene from trans-4-coumarate: step 2/2. Mediates resistance to pathogens which are sensitive to stilbenes. The chain is Stilbene synthase 6 (STS) from Vitis vinifera (Grape).